Reading from the N-terminus, the 351-residue chain is UDP-N-acetylglucosamine--N-acetylmuramyl-(pentapeptide) pyrophosphoryl-undecaprenol N-acetylglucosamine transferase (351 aa).

Residues 13–15 (TGG), asparagine 125, arginine 161, serine 189, isoleucine 241, 260–265 (ALTVCE), and glutamine 285 contribute to the UDP-N-acetyl-alpha-D-glucosamine site.

It belongs to the glycosyltransferase 28 family. MurG subfamily.

The protein localises to the cell inner membrane. It catalyses the reaction di-trans,octa-cis-undecaprenyl diphospho-N-acetyl-alpha-D-muramoyl-L-alanyl-D-glutamyl-meso-2,6-diaminopimeloyl-D-alanyl-D-alanine + UDP-N-acetyl-alpha-D-glucosamine = di-trans,octa-cis-undecaprenyl diphospho-[N-acetyl-alpha-D-glucosaminyl-(1-&gt;4)]-N-acetyl-alpha-D-muramoyl-L-alanyl-D-glutamyl-meso-2,6-diaminopimeloyl-D-alanyl-D-alanine + UDP + H(+). The protein operates within cell wall biogenesis; peptidoglycan biosynthesis. Functionally, cell wall formation. Catalyzes the transfer of a GlcNAc subunit on undecaprenyl-pyrophosphoryl-MurNAc-pentapeptide (lipid intermediate I) to form undecaprenyl-pyrophosphoryl-MurNAc-(pentapeptide)GlcNAc (lipid intermediate II). The protein is UDP-N-acetylglucosamine--N-acetylmuramyl-(pentapeptide) pyrophosphoryl-undecaprenol N-acetylglucosamine transferase of Haemophilus influenzae (strain PittEE).